The chain runs to 312 residues: Very-long-chain 3-oxoacyl-CoA reductase (312 aa).

A helical membrane pass occupies residues 4 to 24; the sequence is ALPAAGFLYWVGASTIAYLTL. 50-79 lines the NADP(+) pocket; the sequence is GEWAVVTGGTDGIGKSYAEELAKRGMKIVL. Transmembrane regions (helical) follow at residues 182–202 and 271–291; these read GVIL…LTVY and GYVI…WIYF. Serine 189 contributes to the substrate binding site. Tyrosine 202 acts as the Proton acceptor in catalysis. Residues 308–312 carry the Di-lysine motif motif; sequence KTKKN.

Belongs to the short-chain dehydrogenases/reductases (SDR) family. 17-beta-HSD 3 subfamily.

It localises to the endoplasmic reticulum membrane. It carries out the reaction a very-long-chain (3R)-3-hydroxyacyl-CoA + NADP(+) = a very-long-chain 3-oxoacyl-CoA + NADPH + H(+). The enzyme catalyses 17beta-estradiol + NAD(+) = estrone + NADH + H(+). The catalysed reaction is 17beta-estradiol + NADP(+) = estrone + NADPH + H(+). It catalyses the reaction 3-oxooctadecanoyl-CoA + NADPH + H(+) = (3R)-hydroxyoctadecanoyl-CoA + NADP(+). It carries out the reaction (7Z,10Z,13Z,16Z)-3-oxodocosatetraenoyl-CoA + NADPH + H(+) = (3R)-hydroxy-(7Z,10Z,13Z,16Z)-docosatetraenoyl-CoA + NADP(+). The enzyme catalyses 3-oxo-(7Z,10Z,13Z,16Z,19Z)-docosapentaenoyl-CoA + NADPH + H(+) = (3R)-hydroxy-(7Z,10Z,13Z,16Z,19Z)-docosapentaenoyl-CoA + NADP(+). The catalysed reaction is (8Z,11Z,14Z)-3-oxoeicosatrienoyl-CoA + NADPH + H(+) = (3R)-hydroxy-(8Z,11Z,14Z)-eicosatrienoyl-CoA + NADP(+). Its pathway is lipid metabolism; fatty acid biosynthesis. The protein operates within steroid biosynthesis; estrogen biosynthesis. Catalyzes the second of the four reactions of the long-chain fatty acids elongation cycle. This endoplasmic reticulum-bound enzymatic process, allows the addition of two carbons to the chain of long- and very long-chain fatty acids/VLCFAs per cycle. This enzyme has a 3-ketoacyl-CoA reductase activity, reducing 3-ketoacyl-CoA to 3-hydroxyacyl-CoA, within each cycle of fatty acid elongation. Thereby, it may participate in the production of VLCFAs of different chain lengths that are involved in multiple biological processes as precursors of membrane lipids and lipid mediators. May also catalyze the transformation of estrone (E1) into estradiol (E2) and play a role in estrogen formation. The sequence is that of Very-long-chain 3-oxoacyl-CoA reductase from Rattus norvegicus (Rat).